We begin with the raw amino-acid sequence, 582 residues long: 5-aminolevulinate synthase, erythroid-specific, mitochondrial (582 aa).

R158 contributes to the succinyl-CoA binding site. Residues C253 and F254 each coordinate pyridoxal 5'-phosphate. Residues S275 and R294 each contribute to the succinyl-CoA site. 3 residues coordinate pyridoxal 5'-phosphate: S327, H355, and T383. The active site involves K386. K386 carries the N6-(pyridoxal phosphate)lysine modification. Pyridoxal 5'-phosphate contacts are provided by T415 and T416. Residue T503 coordinates succinyl-CoA.

Belongs to the class-II pyridoxal-phosphate-dependent aminotransferase family. As to quaternary structure, homodimer. Pyridoxal 5'-phosphate is required as a cofactor.

Its subcellular location is the mitochondrion inner membrane. It catalyses the reaction succinyl-CoA + glycine + H(+) = 5-aminolevulinate + CO2 + CoA. It participates in porphyrin-containing compound metabolism; protoporphyrin-IX biosynthesis; 5-aminolevulinate from glycine: step 1/1. In terms of biological role, catalyzes the pyridoxal 5'-phosphate (PLP)-dependent condensation of succinyl-CoA and glycine to form aminolevulinic acid (ALA), with CoA and CO2 as by-products. Contributes significantly to heme formation during erythropoiesis. The sequence is that of 5-aminolevulinate synthase, erythroid-specific, mitochondrial (alas2) from Opsanus tau (Oyster toadfish).